The sequence spans 190 residues: Inner membrane-spanning protein YciB (190 aa).

6 helical membrane passes run 3-23 (FLFD…AGIY), 24-44 (VATT…WFKH), 49-69 (AMQW…LIFH), 76-96 (WKPT…VVVV), 121-141 (LVWA…AYNF), and 149-169 (FKLF…SVWL).

It belongs to the YciB family.

Its subcellular location is the cell inner membrane. Its function is as follows. Plays a role in cell envelope biogenesis, maintenance of cell envelope integrity and membrane homeostasis. The sequence is that of Inner membrane-spanning protein YciB from Ralstonia pickettii (strain 12J).